Reading from the N-terminus, the 175-residue chain is DELTA-stichotoxin-Hcr4a (175 aa).

Residues A1–A10 are plays an important role in the hemolytic activity. The interval G9–S28 is N-terminal region. The phosphocholine site is built by S52, V85, S103, P105, Y131, Y135, and Y136. Residues S103 to K118 form a trp-rich region, which is important for the binding to lipid membrane region.

Belongs to the actinoporin family. Sea anemone subfamily. As to quaternary structure, octamer or nonamer in membranes. Monomer in the soluble state.

The protein resides in the secreted. It is found in the nematocyst. The protein localises to the target cell membrane. Its function is as follows. Pore-forming protein that forms cations-selective hydrophilic pores of around 1 nm and causes cardiac stimulation and cytolysis. Pore formation is a multi-step process that involves specific recognition of membrane sphingomyelin (but neither cholesterol nor phosphatidylcholine) using aromatic rich region and adjacent phosphocholine (POC) binding site, firm binding to the membrane (mainly driven by hydrophobic interactions) accompanied by the transfer of the N-terminal region to the lipid-water interface and finally pore formation after oligomerization of monomers. This Radianthus crispa (Leathery sea anemone) protein is DELTA-stichotoxin-Hcr4a.